The primary structure comprises 49 residues: Defensin Tk-AMP-D1 (49 aa).

Intrachain disulfides connect cysteine 3–cysteine 49, cysteine 14–cysteine 34, cysteine 20–cysteine 43, and cysteine 24–cysteine 45.

Has weak antifungal activity against F.graminearum and F.verticillioides below 30 ug/ml, but not against A.consortiale B.cinerea, H.sativum, F.culmorum, C.graminicola and D.maydis. In Triticum kiharae (Wheat), this protein is Defensin Tk-AMP-D1.